The chain runs to 354 residues: Ferredoxin--NADP reductase (354 aa).

Residues D42, Q50, Y55, I95, F130, D299, and T339 each contribute to the FAD site.

It belongs to the ferredoxin--NADP reductase type 2 family. Homodimer. The cofactor is FAD.

It catalyses the reaction 2 reduced [2Fe-2S]-[ferredoxin] + NADP(+) + H(+) = 2 oxidized [2Fe-2S]-[ferredoxin] + NADPH. In Acidovorax sp. (strain JS42), this protein is Ferredoxin--NADP reductase.